Reading from the N-terminus, the 181-residue chain is Large ribosomal subunit protein uL5c (181 aa).

The protein belongs to the universal ribosomal protein uL5 family. As to quaternary structure, part of the 50S ribosomal subunit; contacts the 5S rRNA.

It localises to the plastid. The protein resides in the cyanelle. Functionally, binds 5S rRNA, forms part of the central protuberance of the 50S subunit. In Cyanophora paradoxa, this protein is Large ribosomal subunit protein uL5c (rpl5).